The primary structure comprises 398 residues: Phosphoglycerate kinase (398 aa).

Substrate is bound by residues 21-23 (DFN), R36, 59-62 (HLGR), R119, and R157. Residues K208, G296, E327, and 354 to 357 (GGDS) contribute to the ATP site.

Belongs to the phosphoglycerate kinase family. Monomer.

The protein localises to the cytoplasm. The enzyme catalyses (2R)-3-phosphoglycerate + ATP = (2R)-3-phospho-glyceroyl phosphate + ADP. It participates in carbohydrate degradation; glycolysis; pyruvate from D-glyceraldehyde 3-phosphate: step 2/5. This is Phosphoglycerate kinase from Streptococcus equi subsp. zooepidemicus (strain MGCS10565).